The sequence spans 216 residues: Transmembrane emp24 domain-containing protein eca (216 aa).

The N-terminal stretch at 1-20 is a signal peptide; sequence MRDQFISLALILCVLHSACG. The Lumenal segment spans residues 21 to 182; it reads LYFHISETER…FRHTSESTNS (162 aa). A GOLD domain is found at 30 to 126; sequence RKCFIEEVPD…QLRVHLDIQV (97 aa). Residues 134–164 are a coiled coil; sequence AHVAQKEKLTELQLRIRQLLDQVEQITKEQN. Residues 183 to 203 form a helical membrane-spanning segment; the sequence is RVLWWSLAQTVVLVCMGFWQM. Residues 204-216 are Cytoplasmic-facing; sequence RHLKSFFEAKKLV. A Prevents secretion from ER motif is present at residues 213-216; sequence KKLV.

Belongs to the EMP24/GP25L family.

The protein localises to the endoplasmic reticulum membrane. Its function is as follows. Eca and bai are essential, though not redundant, for dorsoventral patterning of the embryo. Specifically required during early embryogenesis for the activity of maternal tkv, while the zygotic tkv is not affected. Involved in Golgi organization. The polypeptide is Transmembrane emp24 domain-containing protein eca (Drosophila melanogaster (Fruit fly)).